We begin with the raw amino-acid sequence, 160 residues long: Large ribosomal subunit protein bL19 (160 aa).

Belongs to the bacterial ribosomal protein bL19 family.

Its function is as follows. This protein is located at the 30S-50S ribosomal subunit interface and may play a role in the structure and function of the aminoacyl-tRNA binding site. This Prochlorococcus marinus subsp. pastoris (strain CCMP1986 / NIES-2087 / MED4) protein is Large ribosomal subunit protein bL19.